The sequence spans 683 residues: Leishmanolysin-like peptidase (683 aa).

Zn(2+) is bound at residue histidine 257. Residue glutamate 258 is part of the active site. The Zn(2+) site is built by histidine 261 and histidine 364.

Belongs to the peptidase M8 family. Requires Zn(2+) as cofactor.

It is found in the cytoplasm. Functionally, essential for the coordination of mitotic progression, and also plays a role in cell migration. In Drosophila melanogaster (Fruit fly), this protein is Leishmanolysin-like peptidase (Invadolysin).